Reading from the N-terminus, the 318-residue chain is Decaprenyl-phosphate phosphoribosyltransferase (318 aa).

2 helical membrane passes run 33-53 (WIKN…GIEY) and 59-79 (AAKV…IYLI). The 5-phospho-alpha-D-ribose 1-diphosphate site is built by Lys35 and Tyr77. Mg(2+) is bound by residues Asn80 and Asp84. Lys94 is a binding site for 5-phospho-alpha-D-ribose 1-diphosphate. Helical transmembrane passes span 99-119 (IAAG…LAVA) and 121-141 (LVIS…YIAV). Lys150 and Arg167 together coordinate 5-phospho-alpha-D-ribose 1-diphosphate. Transmembrane regions (helical) follow at residues 153-173 (AVLD…AGGV) and 177-197 (IPLS…MAAG). Trans,octa-cis-decaprenyl phosphate is bound at residue Lys198. Helical transmembrane passes span 225–245 (LRFV…LWAF), 262–282 (SWYA…AVDI), and 298–318 (RVLQ…IYFS).

Belongs to the UbiA prenyltransferase family. DPPR synthase subfamily. Requires Mg(2+) as cofactor.

The protein resides in the cell inner membrane. It catalyses the reaction trans,octa-cis-decaprenyl phosphate + 5-phospho-alpha-D-ribose 1-diphosphate + H(+) = trans,octa-cis-decaprenylphospho-beta-D-ribofuranose 5-phosphate + diphosphate. The protein operates within cell wall biogenesis; cell wall polysaccharide biosynthesis. In terms of biological role, involved in the biosynthesis of decaprenylphosphoryl arabinose (DPA) a precursor for arabinan synthesis in mycobacterial cell wall biosynthesis. Catalyzes the transfer of a 5-phosphoribosyl residue from phosphoribose diphosphate (PRPP) to decaprenyl phosphate (DP) to form decaprenylphosphoryl-5-phosphoribose (DPPR). The polypeptide is Decaprenyl-phosphate phosphoribosyltransferase (Mycolicibacterium smegmatis (strain ATCC 700084 / mc(2)155) (Mycobacterium smegmatis)).